The sequence spans 309 residues: UDP-N-acetylenolpyruvoylglucosamine reductase (309 aa).

An FAD-binding PCMH-type domain is found at 34 to 221; it reads RVGGPAQVLF…TAAREAAQPI (188 aa). Arginine 179 is a catalytic residue. Residue serine 228 is the Proton donor of the active site. The active site involves glutamate 298.

The protein belongs to the MurB family. FAD serves as cofactor.

The protein localises to the cytoplasm. The catalysed reaction is UDP-N-acetyl-alpha-D-muramate + NADP(+) = UDP-N-acetyl-3-O-(1-carboxyvinyl)-alpha-D-glucosamine + NADPH + H(+). The protein operates within cell wall biogenesis; peptidoglycan biosynthesis. Cell wall formation. This chain is UDP-N-acetylenolpyruvoylglucosamine reductase, found in Methylorubrum extorquens (strain PA1) (Methylobacterium extorquens).